A 302-amino-acid polypeptide reads, in one-letter code: Formylmethanofuran--tetrahydromethanopterin formyltransferase (302 aa).

This sequence belongs to the FTR family. Homotetramer.

The protein localises to the cytoplasm. The enzyme catalyses N-formylmethanofuran + 5,6,7,8-tetrahydromethanopterin + H(+) = N(5)-formyl-5,6,7,8-tetrahydromethanopterin + methanofuran. Its pathway is one-carbon metabolism; formaldehyde degradation; formate from formaldehyde (H(4)MPT route): step 4/5. Its function is as follows. Catalyzes the transfer of a formyl group from 5-formyl tetrahydromethanopterin (5-formyl-H(4)MPT) to methanofuran (MFR) to produce formylmethanofuran (formyl-MFR) and tetrahydromethanopterin (H(4)MPT). The chain is Formylmethanofuran--tetrahydromethanopterin formyltransferase from Methylobacillus flagellatus (strain ATCC 51484 / DSM 6875 / VKM B-1610 / KT).